Here is a 292-residue protein sequence, read N- to C-terminus: Proteasome subunit beta (292 aa).

A propeptide spans 1–62 (MSESLGSVPG…HRAADDIPHG (62 aa)) (removed in mature form; by autocatalysis). The active-site Nucleophile is Thr63.

It belongs to the peptidase T1B family. As to quaternary structure, the 20S proteasome core is composed of 14 alpha and 14 beta subunits that assemble into four stacked heptameric rings, resulting in a barrel-shaped structure. The two inner rings, each composed of seven catalytic beta subunits, are sandwiched by two outer rings, each composed of seven alpha subunits. The catalytic chamber with the active sites is on the inside of the barrel. Has a gated structure, the ends of the cylinder being occluded by the N-termini of the alpha-subunits. Is capped by the proteasome-associated ATPase, ARC.

Its subcellular location is the cytoplasm. The catalysed reaction is Cleavage of peptide bonds with very broad specificity.. It functions in the pathway protein degradation; proteasomal Pup-dependent pathway. With respect to regulation, the formation of the proteasomal ATPase ARC-20S proteasome complex, likely via the docking of the C-termini of ARC into the intersubunit pockets in the alpha-rings, may trigger opening of the gate for substrate entry. Interconversion between the open-gate and close-gate conformations leads to a dynamic regulation of the 20S proteasome proteolysis activity. In terms of biological role, component of the proteasome core, a large protease complex with broad specificity involved in protein degradation. The chain is Proteasome subunit beta from Gordonia bronchialis (strain ATCC 25592 / DSM 43247 / BCRC 13721 / JCM 3198 / KCTC 3076 / NBRC 16047 / NCTC 10667) (Rhodococcus bronchialis).